Reading from the N-terminus, the 89-residue chain is Small ribosomal subunit protein uS17 (89 aa).

It belongs to the universal ribosomal protein uS17 family. As to quaternary structure, part of the 30S ribosomal subunit.

Its function is as follows. One of the primary rRNA binding proteins, it binds specifically to the 5'-end of 16S ribosomal RNA. The sequence is that of Small ribosomal subunit protein uS17 from Leptospira borgpetersenii serovar Hardjo-bovis (strain JB197).